The primary structure comprises 508 residues: Phosphoenolpyruvate carboxylase (508 aa).

This sequence belongs to the PEPCase type 2 family. Homotetramer. Mg(2+) serves as cofactor.

The catalysed reaction is oxaloacetate + phosphate = phosphoenolpyruvate + hydrogencarbonate. Functionally, catalyzes the irreversible beta-carboxylation of phosphoenolpyruvate (PEP) to form oxaloacetate (OAA), a four-carbon dicarboxylic acid source for the tricarboxylic acid cycle. This Picrophilus torridus (strain ATCC 700027 / DSM 9790 / JCM 10055 / NBRC 100828 / KAW 2/3) protein is Phosphoenolpyruvate carboxylase.